A 184-amino-acid polypeptide reads, in one-letter code: ATP synthase subunit delta (184 aa).

This sequence belongs to the ATPase delta chain family. In terms of assembly, F-type ATPases have 2 components, F(1) - the catalytic core - and F(0) - the membrane proton channel. F(1) has five subunits: alpha(3), beta(3), gamma(1), delta(1), epsilon(1). F(0) has three main subunits: a(1), b(2) and c(10-14). The alpha and beta chains form an alternating ring which encloses part of the gamma chain. F(1) is attached to F(0) by a central stalk formed by the gamma and epsilon chains, while a peripheral stalk is formed by the delta and b chains.

The protein resides in the cell inner membrane. In terms of biological role, f(1)F(0) ATP synthase produces ATP from ADP in the presence of a proton or sodium gradient. F-type ATPases consist of two structural domains, F(1) containing the extramembraneous catalytic core and F(0) containing the membrane proton channel, linked together by a central stalk and a peripheral stalk. During catalysis, ATP synthesis in the catalytic domain of F(1) is coupled via a rotary mechanism of the central stalk subunits to proton translocation. Its function is as follows. This protein is part of the stalk that links CF(0) to CF(1). It either transmits conformational changes from CF(0) to CF(1) or is implicated in proton conduction. This is ATP synthase subunit delta from Zymomonas mobilis subsp. mobilis (strain ATCC 31821 / ZM4 / CP4).